Reading from the N-terminus, the 1010-residue chain is Sodium/potassium-transporting ATPase subunit alpha-3 (1010 aa).

The tract at residues 1 to 21 is disordered; the sequence is MGDKGEKESPKKGKGKRDLDD. The Cytoplasmic portion of the chain corresponds to 1–74; that stretch reads MGDKGEKESP…NALTPPPTTP (74 aa). An interaction with phosphoinositide-3 kinase region spans residues 69 to 71; that stretch reads PPP. The chain crosses the membrane as a helical span at residues 75–95; the sequence is EWVKFCRQLFGGFSILLWIGA. Residues 96 to 118 lie on the Extracellular side of the membrane; sequence ILCFLAYGIQAGTEDEPSNDNLY. The helical transmembrane segment at 119-139 threads the bilayer; that stretch reads LGIVLAAVVIITGCFSYYQEA. Residues 140–275 lie on the Cytoplasmic side of the membrane; the sequence is KSSKIMESFK…VGKTPIAVEI (136 aa). A helical membrane pass occupies residues 276-295; that stretch reads EHFIQLITGVAVFLGISFFV. Residues 296–307 lie on the Extracellular side of the membrane; sequence LSLILGYTWLEA. The chain crosses the membrane as a helical span at residues 308–325; that stretch reads VIFLIGIIVANVPEGLLA. Topologically, residues 326-759 are cytoplasmic; that stretch reads TVTVCLTLTA…EEGRLIFDNL (434 aa). Asp-363 acts as the 4-aspartylphosphate intermediate in catalysis. 2 residues coordinate Mg(2+): Asp-704 and Asp-708. A helical transmembrane segment spans residues 760–779; the sequence is KKSIAYTLTSNIPEITPFLL. Residues 780–789 are Extracellular-facing; sequence FIMANIPLPL. A helical membrane pass occupies residues 790 to 810; sequence GTITILCIDLGTDMVPAISLA. The Cytoplasmic segment spans residues 811–830; the sequence is YEAAESDIMKRQPRNPRSDK. Residues 831–853 form a helical membrane-spanning segment; that stretch reads LVNERLISMAYGQIGMIQALGGF. Topologically, residues 854 to 905 are extracellular; sequence FSYFVILAENGFLPSCLVGIRLSWDDRTINDLEDSYGQQWTYEQRKVVEFTC. A helical membrane pass occupies residues 906 to 925; that stretch reads HTAFFVSIVVVQWADLIICK. Residues 926–938 are Cytoplasmic-facing; sequence TRRNSVFQQGMKN. Residue Ser-930 is modified to Phosphoserine; by PKA. The chain crosses the membrane as a helical span at residues 939–957; the sequence is KILIFGLFEETALAAFLSY. Residues 958-972 are Extracellular-facing; that stretch reads CPGMDVALRMYPLKP. The chain crosses the membrane as a helical span at residues 973-993; it reads SWWFCAFPYSFLIFVYDEIRK. Residues 994-1010 lie on the Cytoplasmic side of the membrane; that stretch reads LILRRNPGGWVEKETYY.

This sequence belongs to the cation transport ATPase (P-type) (TC 3.A.3) family. Type IIC subfamily. In terms of assembly, the sodium/potassium-transporting ATPase is composed of a catalytic alpha subunit, an auxiliary non-catalytic beta subunit and an additional regulatory subunit.

It is found in the cell membrane. It catalyses the reaction K(+)(out) + Na(+)(in) + ATP + H2O = K(+)(in) + Na(+)(out) + ADP + phosphate + H(+). Its function is as follows. This is the catalytic component of the active enzyme, which catalyzes the hydrolysis of ATP coupled with the exchange of sodium and potassium ions across the plasma membrane. This action creates the electrochemical gradient of sodium and potassium ions, providing the energy for active transport of various nutrients. In Gallus gallus (Chicken), this protein is Sodium/potassium-transporting ATPase subunit alpha-3 (ATP1A3).